We begin with the raw amino-acid sequence, 64 residues long: DNA gyrase inhibitor YacG (64 aa).

Zn(2+)-binding residues include cysteine 10, cysteine 13, cysteine 29, and cysteine 33.

This sequence belongs to the DNA gyrase inhibitor YacG family. As to quaternary structure, interacts with GyrB. Zn(2+) serves as cofactor.

Functionally, inhibits all the catalytic activities of DNA gyrase by preventing its interaction with DNA. Acts by binding directly to the C-terminal domain of GyrB, which probably disrupts DNA binding by the gyrase. The polypeptide is DNA gyrase inhibitor YacG (Pectobacterium carotovorum subsp. carotovorum (strain PC1)).